Consider the following 312-residue polypeptide: Dihydroorotate dehydrogenase B (NAD(+)), catalytic subunit (312 aa).

FMN contacts are provided by residues Ser23 and Lys47–Ala48. Substrate is bound by residues Lys47 and Asn71–Leu75. FMN-binding residues include Asn102 and Asn130. Residue Asn130 participates in substrate binding. The active-site Nucleophile is the Cys133. Lys168 and Ile194 together coordinate FMN. Residue Asn195–Thr196 coordinates substrate. Residues Gly220, Gly246–Gly247, and Gly268–Thr269 contribute to the FMN site.

It belongs to the dihydroorotate dehydrogenase family. Type 1 subfamily. In terms of assembly, heterotetramer of 2 PyrK and 2 PyrD type B subunits. The cofactor is FMN.

It is found in the cytoplasm. The catalysed reaction is (S)-dihydroorotate + NAD(+) = orotate + NADH + H(+). It participates in pyrimidine metabolism; UMP biosynthesis via de novo pathway; orotate from (S)-dihydroorotate (NAD(+) route): step 1/1. Its function is as follows. Catalyzes the conversion of dihydroorotate to orotate with NAD(+) as electron acceptor. The polypeptide is Dihydroorotate dehydrogenase B (NAD(+)), catalytic subunit (pyrDB) (Enterococcus faecalis (strain ATCC 700802 / V583)).